The following is a 493-amino-acid chain: GTPase Der (493 aa).

In terms of domain architecture, EngA-type G 1 spans 3-166; the sequence is PVIALVGRPN…EALGIFPKDN (164 aa). GTP contacts are provided by residues 9-16, 56-60, and 118-121; these read GRPNVGKS, DTGGI, and NKVD. A compositionally biased stretch (acidic residues) spans 167 to 184; that stretch reads VEEEGEGEPASEEVAEGE. The disordered stretch occupies residues 167–195; sequence VEEEGEGEPASEEVAEGEEPTRIPGPSEK. One can recognise an EngA-type G 2 domain in the interval 198–371; sequence IKIAIIGRPN…SVQESFRSAV (174 aa). GTP contacts are provided by residues 204-211, 251-255, and 316-319; these read GRPNVGKS, DTAGV, and NKWD. The KH-like domain occupies 372–456; the sequence is TRWPTSRLTS…PIRIEYKGGE (85 aa). Positions 454–463 are enriched in basic and acidic residues; sequence GGENPYEGKK. Residues 454–493 form a disordered region; it reads GGENPYEGKKNSLTARQVNKKRRLMSHHKKAEKKKKDKRR. Residues 471 to 493 are compositionally biased toward basic residues; sequence VNKKRRLMSHHKKAEKKKKDKRR.

This sequence belongs to the TRAFAC class TrmE-Era-EngA-EngB-Septin-like GTPase superfamily. EngA (Der) GTPase family. Associates with the 50S ribosomal subunit.

In terms of biological role, GTPase that plays an essential role in the late steps of ribosome biogenesis. The polypeptide is GTPase Der (Pseudomonas aeruginosa (strain LESB58)).